We begin with the raw amino-acid sequence, 175 residues long: Catabolic 3-dehydroquinase (175 aa).

The Proton acceptor role is filled by tyrosine 23. Positions 74, 80, and 87 each coordinate substrate. The active-site Proton donor is histidine 100. Residues 101–102 (IS) and arginine 111 each bind substrate.

It belongs to the type-II 3-dehydroquinase family. Homododecamer. Adopts a ring-like structure, composed of an arrangement of two hexameric rings stacked on top of one another.

It carries out the reaction 3-dehydroquinate = 3-dehydroshikimate + H2O. Its pathway is aromatic compound metabolism; 3,4-dihydroxybenzoate biosynthesis; 3,4-dihydroxybenzoate from 3-dehydroquinate: step 1/2. Is involved in the catabolism of quinate. Allows the utilization of quinate as carbon source via the beta-ketoadipate pathway. The sequence is that of Catabolic 3-dehydroquinase from Talaromyces marneffei (strain ATCC 18224 / CBS 334.59 / QM 7333) (Penicillium marneffei).